The following is a 354-amino-acid chain: NADH-ubiquinone oxidoreductase chain 2 (354 aa).

The next 10 membrane-spanning stretches (helical) occupy residues 5-25 (ILMV…SSHH), 26-46 (WFTL…ILSY), 60-80 (FLVQ…QAWL), 96-116 (FLMT…YWFP), 122-142 (VGFI…FAVL), 149-169 (LNIS…GWGG), 198-218 (VSVA…VFFM), 242-262 (AGLV…GFLI), 274-294 (GCFI…FFYL), and 330-350 (VLLS…PVFI).

Belongs to the complex I subunit 2 family.

The protein localises to the mitochondrion inner membrane. The enzyme catalyses a ubiquinone + NADH + 5 H(+)(in) = a ubiquinol + NAD(+) + 4 H(+)(out). Functionally, core subunit of the mitochondrial membrane respiratory chain NADH dehydrogenase (Complex I) that is believed to belong to the minimal assembly required for catalysis. Complex I functions in the transfer of electrons from NADH to the respiratory chain. The immediate electron acceptor for the enzyme is believed to be ubiquinone. This Patiria pectinifera (Starfish) protein is NADH-ubiquinone oxidoreductase chain 2 (ND2).